The primary structure comprises 144 residues: uncharacterized protein (144 aa).

Positions M1–S22 are cleaved as a signal peptide.

This is an uncharacterized protein from Saccharomyces cerevisiae (strain ATCC 204508 / S288c) (Baker's yeast).